The primary structure comprises 370 residues: Luciferin sulfotransferase (370 aa).

Lys90 to Trp95 provides a ligand contact to 3'-phosphoadenylyl sulfate. His165 (proton acceptor) is an active-site residue. Residues Arg189, Ser197, Tyr250, Leu284–Met289, and Phe316–Gly320 contribute to the 3'-phosphoadenylyl sulfate site.

This sequence belongs to the sulfotransferase 1 family.

The enzyme catalyses firefly D-luciferin + 3'-phosphoadenylyl sulfate = firefly D-sulfoluciferin + adenosine 3',5'-bisphosphate + H(+). It carries out the reaction firefly L-luciferin + 3'-phosphoadenylyl sulfate = firefly L-sulfoluciferin + adenosine 3',5'-bisphosphate + H(+). Sulfoluciferin formation is inhibited by the product adenosine 3',5'-bisphosphate. Catalyzes the production of firefly sulfoluciferin from luciferin using the sulfo-donor 3'-phosphoadenylyl sulfate (PAPS). Is also able to catalyze the reverse reaction, i.e. the adenosine 3',5'-bisphosphate-dependent desulfonation of sulfoluciferin. Can use either D- or L-luciferin stereoisomer as substrate. Sulfoluciferin, which is not a substrate of P.pyralis luciferase, likely serves as a luciferin storage form in fireflies. The protein is Luciferin sulfotransferase of Photinus pyralis (Common eastern firefly).